The sequence spans 89 residues: Small ribosomal subunit protein uS14A (89 aa).

Belongs to the universal ribosomal protein uS14 family. Part of the 30S ribosomal subunit. Contacts proteins S3 and S10.

Functionally, binds 16S rRNA, required for the assembly of 30S particles and may also be responsible for determining the conformation of the 16S rRNA at the A site. The chain is Small ribosomal subunit protein uS14A from Listeria innocua serovar 6a (strain ATCC BAA-680 / CLIP 11262).